Consider the following 860-residue polypeptide: Protein argonaute-3 (860 aa).

Residue Met1 is modified to N-acetylmethionine. In terms of domain architecture, PAZ spans 230–349 (PVIQFMCEVL…LPLEVCNIVA (120 aa)). The Piwi domain occupies 518–819 (LIIVILPGKT…VAFRARYHLV (302 aa)). An interaction with guide RNA region spans residues 530–567 (YAEVKRVGDTLLGMATQCVQVKNVIKTSPQTLSNLCLK). Asp598, Glu638, and Asp670 together coordinate a divalent metal cation. The interval 758–805 (QGTSRPSHYHVLWDDNFFTADELQLLTYQLCHTYVRCTRSVSIPAPAY) is interaction with guide RNA. His808 contacts a divalent metal cation. A Phosphoserine modification is found at Ser825.

This sequence belongs to the argonaute family. Ago subfamily. In terms of assembly, interacts with EIF4B, IMP8, PRMT5 and TNRC6B. Interacts with APOBEC3F, APOBEC3G and APOBEC3H. Interacts with EDC4. Ubiquitinated on surface-exposed lysines by a SCF-like E3 ubiquitin-protein ligase complex containing ZSWIM8 during target-directed microRNA degradation (TDMD), a process that mediates degradation of microRNAs (miRNAs). Ubiquitination by the SCF-like E3 ubiquitin-protein ligase complex containing ZSWIM8 leads to its subsequent degradation, thereby exposing miRNAs for degradation. ZSWIM8 recognizes and binds AGO3 when it is engaged with a TDMD target.

It localises to the cytoplasm. The protein resides in the P-body. The enzyme catalyses Endonucleolytic cleavage to 5'-phosphomonoester.. Its function is as follows. Required for RNA-mediated gene silencing (RNAi). Binds to short RNAs such as microRNAs (miRNAs) and represses the translation of mRNAs which are complementary to them. Proposed to be involved in stabilization of small RNA derivates (siRNA) derived from processed RNA polymerase III-transcribed Alu repeats containing a DR2 retinoic acid response element (RARE) in stem cells and in the subsequent siRNA-dependent degradation of a subset of RNA polymerase II-transcribed coding mRNAs by recruiting a mRNA decapping complex involving EDC4. Possesses RNA slicer activity but only on select RNAs bearing 5'- and 3'-flanking sequences to the region of guide-target complementarity. The protein is Protein argonaute-3 (Ago3) of Mus musculus (Mouse).